We begin with the raw amino-acid sequence, 277 residues long: Glutamate racemase (277 aa).

Residues 25–26 (DS) and 57–58 (YG) contribute to the substrate site. Residue C89 is the Proton donor/acceptor of the active site. 90-91 (NT) provides a ligand contact to substrate. The active-site Proton donor/acceptor is the C204. Residue 205-206 (TH) coordinates substrate.

Belongs to the aspartate/glutamate racemases family.

It catalyses the reaction L-glutamate = D-glutamate. Its pathway is cell wall biogenesis; peptidoglycan biosynthesis. Functionally, provides the (R)-glutamate required for cell wall biosynthesis. This is Glutamate racemase from Brucella abortus (strain 2308).